The following is a 168-amino-acid chain: Cell division inhibitor SulA (168 aa).

The segment at 105–111 (ALETGNY) is ftsZ binding. The interval 161-168 (RIHSGMVH) is lon protease binding.

This sequence belongs to the SulA family. As to quaternary structure, interacts with FtsZ. In terms of processing, is rapidly cleaved and degraded by the Lon protease once DNA damage is repaired.

Its function is as follows. Component of the SOS system and an inhibitor of cell division. Accumulation of SulA causes rapid cessation of cell division and the appearance of long, non-septate filaments. In the presence of GTP, binds a polymerization-competent form of FtsZ in a 1:1 ratio, thus inhibiting FtsZ polymerization and therefore preventing it from participating in the assembly of the Z ring. This mechanism prevents the premature segregation of damaged DNA to daughter cells during cell division. The sequence is that of Cell division inhibitor SulA from Cronobacter sakazakii (strain ATCC BAA-894) (Enterobacter sakazakii).